Here is a 473-residue protein sequence, read N- to C-terminus: Vasculin (473 aa).

Disordered regions lie at residues 1–25 (MAQH…SSLN), 46–149 (RHNS…REPN), and 191–342 (VGNL…QERD). The residue at position 49 (serine 49) is a Phosphoserine. Arginine 87 is subject to Omega-N-methylarginine. The segment covering 119–133 (ETGRKEDKRERKQFE) has biased composition (basic and acidic residues). 2 stretches are compositionally biased toward polar residues: residues 194 to 204 (LPSQPVKNGTG) and 251 to 286 (AFKS…QQPR). 4 positions are modified to phosphoserine: serine 274, serine 276, serine 322, and serine 381. The span at 293 to 329 (MRTDKKSEFLKALKRDRVEEEHEDESRAGSEKDDDSF) shows a compositional bias: basic and acidic residues. The disordered stretch occupies residues 444–473 (GPWKNSTFKPTTENDDTETSSSDTSDDDDV). Residues 456-473 (ENDDTETSSSDTSDDDDV) show a composition bias toward acidic residues.

This sequence belongs to the vasculin family. Interacts with GTF2B, GTF2F2, RNA polymerase II and TBP. Widely expressed. Some isoforms may be specifically expressed in veins and arteries (at protein level). Isoform 4 is widely expressed. Isoform 1, isoform 2 and isoform 3 may be specifically expressed in vascular smooth muscle cells.

It localises to the nucleus. The protein localises to the cytoplasm. Functions as a GC-rich promoter-specific transactivating transcription factor. The polypeptide is Vasculin (GPBP1) (Homo sapiens (Human)).